Here is a 103-residue protein sequence, read N- to C-terminus: Small ribosomal subunit protein uS10 (103 aa).

Belongs to the universal ribosomal protein uS10 family. As to quaternary structure, part of the 30S ribosomal subunit.

Functionally, involved in the binding of tRNA to the ribosomes. This Marinomonas sp. (strain MWYL1) protein is Small ribosomal subunit protein uS10.